A 468-amino-acid chain; its full sequence is MAVSVDQTLAGKYPAKLHAKRVAARIQELGHGDSGIIYLEGQKTHMIEDSDGEMPFRQRRNFFYLSGCPLPDSYLTYDIKADKLTIFIPPIDPASVIWSGLPLSVEEALEIYDVDAVLSTAEVNASLAHYCSAQGGKKVFAIADQVSPHITFLPFQEIDFDVLKRAAEESRVVKDSYEIALLRRANEISSKAHVAVFKAAMSARNERELEAIFVGACMSSGCREQSYHPIFASGTNAATLHYQKNDEDLVDSVTGQRRLNMLIDAGAEYRNYCADITRVVPLSGKFSPESRQIYDIVLEMQNSSLAMIKAGVMWEDVHSTSHRVAIRGLLKLGILRGTEEELFEKGISVAFFPHGLGHYLGMDTHDTGGNPNYADKDPKFKYLRLRGPLASGGVVTVEPGIYFCRFIIDPYLSSPDLGKYINADVLGRYWSVGGVRIEDNVVVTDNGYDNLTTAPKLPEEIEKLATEK.

The Mn(2+) site is built by D264, D275, E398, and E438.

The protein belongs to the peptidase M24B family. The cofactor is Mn(2+).

It carries out the reaction Release of any N-terminal amino acid, including proline, that is linked to proline, even from a dipeptide or tripeptide.. Its function is as follows. Catalyzes the removal of a penultimate prolyl residue from the N-termini of peptides. In Paracoccidioides lutzii (strain ATCC MYA-826 / Pb01) (Paracoccidioides brasiliensis), this protein is Probable Xaa-Pro aminopeptidase PEPP (PEPP).